Reading from the N-terminus, the 51-residue chain is Large ribosomal subunit protein bL33 (51 aa).

It belongs to the bacterial ribosomal protein bL33 family.

The chain is Large ribosomal subunit protein bL33 from Francisella philomiragia subsp. philomiragia (strain ATCC 25017 / CCUG 19701 / FSC 153 / O#319-036).